The sequence spans 1146 residues: Reverse gyrase 1 (1146 aa).

The segment at 1-38 (MIKAIFDTLCPNCGGEISAERLLKGLPCEKCLPEEVNR) adopts an RG N-terminal-type zinc-finger fold. Residues Cys-10, Cys-13, Cys-28, and Cys-31 each contribute to the Zn(2+) site. ATP contacts are provided by residues Gln-79 and 96–103 (APTGVGKT). A Helicase ATP-binding domain is found at 83-240 (ARKVFLGRSF…RLKEKPNKSE (158 aa)). A DEAD box motif is present at residues 197 to 200 (DDVD). A Helicase C-terminal domain is found at 412–565 (HLLWALLSLR…FKKIEEVDLK (154 aa)). A topoisomerase I region spans residues 592–1146 (EHVKPVLVVV…KVNEFEKANV (555 aa)). Residues 596–728 (PVLVVVESPN…NVERIEFHEV (133 aa)) form the Toprim domain. Residues Glu-602 and Asp-697 each contribute to the Mg(2+) site. The Topo IA-type catalytic domain occupies 744 to 1142 (NENLVKAQLV…ELYKKVNEFE (399 aa)). The active-site O-(5'-phospho-DNA)-tyrosine intermediate is the Tyr-891.

The protein in the N-terminal section; belongs to the DEAD box helicase family. DDVD subfamily. In the C-terminal section; belongs to the type IA topoisomerase family. In terms of assembly, monomer. The cofactor is Zn(2+). Mg(2+) is required as a cofactor.

The protein localises to the cytoplasm. The enzyme catalyses ATP + H2O = ADP + phosphate + H(+). In terms of biological role, modifies the topological state of DNA by introducing positive supercoils in an ATP-dependent process, increasing the linking number in steps of +1. Binds to single-stranded DNA, transiently cleaves and then rejoins the ends, introducing a positive supercoil in the process. The scissile phosphodiester is attacked by the catalytic tyrosine of the enzyme, resulting in the formation of a DNA-(5'-phosphotyrosyl)-enzyme intermediate. Probably involved in rewinding DNA strands in regions of the chromosome that have opened up to allow replication, transcription, DNA repair and/or for DNA protection. This chain is Reverse gyrase 1, found in Aquifex aeolicus (strain VF5).